A 569-amino-acid polypeptide reads, in one-letter code: Alpha-amylase (569 aa).

A signal peptide spans 1–28 (MARKTVAAALALVAGAAVAVTGNAPAQA). Residues Asn120, Gln166, and Asp175 each contribute to the Ca(2+) site. Asp205 acts as the Nucleophile in catalysis. Residue His209 coordinates Ca(2+). Catalysis depends on Glu232, which acts as the Proton donor. Residues 468-569 (TTPPATSGAS…QLVLNDTFRS (102 aa)) form the CBM20 domain.

Belongs to the glycosyl hydrolase 13 family. In terms of assembly, monomer. It depends on Ca(2+) as a cofactor.

The enzyme catalyses Endohydrolysis of (1-&gt;4)-alpha-D-glucosidic linkages in polysaccharides containing three or more (1-&gt;4)-alpha-linked D-glucose units.. This chain is Alpha-amylase (aml), found in Streptomyces violaceus (Streptomyces venezuelae).